We begin with the raw amino-acid sequence, 93 residues long: YcgL domain-containing protein VIBHAR_01387 (93 aa).

Residues Met1 to Lys84 enclose the YcgL domain.

This is YcgL domain-containing protein VIBHAR_01387 from Vibrio campbellii (strain ATCC BAA-1116).